Reading from the N-terminus, the 465-residue chain is tRNA modification GTPase MnmE (465 aa).

Positions 21, 85, and 124 each coordinate (6S)-5-formyl-5,6,7,8-tetrahydrofolate. The TrmE-type G domain occupies 220 to 387 (GVPVAIIGET…LQQRLVAAAH (168 aa)). A K(+)-binding site is contributed by N230. GTP contacts are provided by residues 230 to 235 (NAGKST), 249 to 255 (SDIHGTT), and 274 to 277 (DTAG). Position 234 (S234) interacts with Mg(2+). K(+) is bound by residues S249, I251, and T254. Mg(2+) is bound at residue T255. Position 465 (K465) interacts with (6S)-5-formyl-5,6,7,8-tetrahydrofolate.

This sequence belongs to the TRAFAC class TrmE-Era-EngA-EngB-Septin-like GTPase superfamily. TrmE GTPase family. As to quaternary structure, homodimer. Heterotetramer of two MnmE and two MnmG subunits. It depends on K(+) as a cofactor.

It is found in the cytoplasm. Exhibits a very high intrinsic GTPase hydrolysis rate. Involved in the addition of a carboxymethylaminomethyl (cmnm) group at the wobble position (U34) of certain tRNAs, forming tRNA-cmnm(5)s(2)U34. The polypeptide is tRNA modification GTPase MnmE (Bacteroides fragilis (strain YCH46)).